The sequence spans 62 residues: Large ribosomal subunit protein bL32 (62 aa).

A compositionally biased stretch (basic residues) spans methionine 1–arginine 16. Residues methionine 1–glutamate 62 form a disordered region. Residues valine 53–glutamate 62 show a composition bias toward polar residues.

It belongs to the bacterial ribosomal protein bL32 family.

This is Large ribosomal subunit protein bL32 from Alcanivorax borkumensis (strain ATCC 700651 / DSM 11573 / NCIMB 13689 / SK2).